The primary structure comprises 236 residues: Ubiquinone biosynthesis O-methyltransferase (236 aa).

S-adenosyl-L-methionine-binding residues include Arg39, Gly59, Asp80, and Met124.

The protein belongs to the methyltransferase superfamily. UbiG/COQ3 family.

It carries out the reaction a 3-demethylubiquinol + S-adenosyl-L-methionine = a ubiquinol + S-adenosyl-L-homocysteine + H(+). It catalyses the reaction a 3-(all-trans-polyprenyl)benzene-1,2-diol + S-adenosyl-L-methionine = a 2-methoxy-6-(all-trans-polyprenyl)phenol + S-adenosyl-L-homocysteine + H(+). It functions in the pathway cofactor biosynthesis; ubiquinone biosynthesis. Functionally, O-methyltransferase that catalyzes the 2 O-methylation steps in the ubiquinone biosynthetic pathway. The polypeptide is Ubiquinone biosynthesis O-methyltransferase (Shewanella baltica (strain OS223)).